A 303-amino-acid polypeptide reads, in one-letter code: HTH-type transcriptional regulator LinR (303 aa).

The region spanning 6–63 (LDFRHLVLLDALLKRHSVSAAARELDLPQPTASHGLARLRKALGDPLLVRARDGMEPT) is the HTH lysR-type domain. The segment at residues 23 to 42 (VSAAARELDLPQPTASHGLA) is a DNA-binding region (H-T-H motif).

Belongs to the LysR transcriptional regulatory family.

Positively regulates the transcription of the linD and linE genes that are involved in gamma-hexachlorocyclohexane (gamma-HCH or lindane) degradation. This degradation pathway allows S.japonicum UT26 to grow on gamma-HCH as the sole source of carbon and energy. The chain is HTH-type transcriptional regulator LinR (linR) from Sphingobium indicum (strain DSM 16413 / CCM 7287 / MTCC 6362 / UT26 / NBRC 101211 / UT26S) (Sphingobium japonicum).